The sequence spans 166 residues: UPF0254 protein Maeo_0668 (166 aa).

The protein belongs to the UPF0254 family.

This is UPF0254 protein Maeo_0668 from Methanococcus aeolicus (strain ATCC BAA-1280 / DSM 17508 / OCM 812 / Nankai-3).